We begin with the raw amino-acid sequence, 69 residues long: Small ribosomal subunit protein bS21 (69 aa).

The tract at residues 50–69 is disordered; it reads KAFKRKQAKKVRKLKQKTNR.

This sequence belongs to the bacterial ribosomal protein bS21 family.

This chain is Small ribosomal subunit protein bS21, found in Borrelia garinii subsp. bavariensis (strain ATCC BAA-2496 / DSM 23469 / PBi) (Borreliella bavariensis).